The primary structure comprises 85 residues: High affinity immunoglobulin epsilon receptor subunit gamma (85 aa).

The signal sequence occupies residues 1–18 (MIPAVVLLLLLLVEQAAA). Over 19–23 (LGEPQ) the chain is Extracellular. The chain crosses the membrane as a helical span at residues 24–44 (LCYILDAILFLYGIVLTLLYC). The Cytoplasmic segment spans residues 45–85 (RLKLQVRKAATASEKSDGIYTGLSTRTQETYETLKHEKPPQ). The ITAM domain occupies 53–81 (AATASEKSDGIYTGLSTRTQETYETLKHE). Y64 is modified (phosphotyrosine). S68 is modified (phosphoserine). Phosphotyrosine is present on Y75. Residue T77 is modified to Phosphothreonine.

This sequence belongs to the CD3Z/FCER1G family. As to quaternary structure, igE Fc receptor is a tetramer of an alpha chain, a beta chain, and two disulfide linked gamma chains. Associates with FCGR1A; forms a functional signaling complex. The signaling subunit of immunoglobulin gamma (IgG) Fc receptor complex. As a homodimer or a heterodimer of CD247 and FCER1G, associates with the ligand binding subunit FCGR3A to form a functional receptor complex. Associates with CLEC6A. Interacts with CLEC4E. Interacts (via ITAM domain) with SYK (via SH2 domains); activates SYK, enabling integrin-mediated activation of neutrophils and macrophages. Interacts with CSF2RB and recruits SYK in response to IL3 stimulation; this interaction is direct. Interacts with CD300LH; the interaction may be indirect. Interacts with CD300LD. Interacts with TARM1.

The protein localises to the cell membrane. Adapter protein containing an immunoreceptor tyrosine-based activation motif (ITAM) that transduces activation signals from various immunoreceptors. As a component of the high-affinity immunoglobulin E (IgE) receptor, mediates allergic inflammatory signaling in mast cells. As a constitutive component of interleukin-3 receptor complex, selectively mediates interleukin 4/IL4 production by basophils priming T-cells toward effector T-helper 2 subset. Associates with pattern recognition receptors CLEC4D and CLEC4E to form a functional signaling complex in myeloid cells. Binding of mycobacterial trehalose 6,6'-dimycolate (TDM) to this receptor complex leads to phosphorylation of ITAM, triggering activation of SYK, CARD9 and NF-kappa-B, consequently driving maturation of antigen-presenting cells and shaping antigen-specific priming of T-cells toward effector T-helper 1 and T-helper 17 cell subtypes. May function cooperatively with other activating receptors. Functionally linked to integrin beta-2/ITGB2-mediated neutrophil activation. Also involved in integrin alpha-2/ITGA2-mediated platelet activation. This is High affinity immunoglobulin epsilon receptor subunit gamma (FCER1G) from Bos taurus (Bovine).